Consider the following 318-residue polypeptide: Protein W (318 aa).

Disordered regions lie at residues 1 to 23 (MDQD…GGRE) and 38 to 318 (SEPT…KKGA). Positions 7–20 (ILKEDSEVEREAPG) are enriched in basic and acidic residues. Polar residues predominate over residues 50–59 (LHNTINTPQG). At S68 the chain carries Phosphoserine; by host. The segment covering 83–101 (RSGEESRVSGRTSKPEAEA) has biased composition (basic and acidic residues). Position 125 is a phosphoserine; by host (S125). Over residues 150 to 168 (GIEDENREMAAHPDKRGED) the composition is skewed to basic and acidic residues. Over residues 191 to 206 (ASNNGRSMEPGSSHSA) the composition is skewed to polar residues. 4 positions are modified to phosphoserine; by host: S192, S249, S257, and S260.

The chain is Protein W (P/V/C) from Sendai virus (strain Harris) (SeV).